A 455-amino-acid polypeptide reads, in one-letter code: MREVITINIGQAGCQLGNKCWELFCLEHGIQPDGTAIANSNEKRSVITGGIDTAYNAFFQELQNGRHVPRAIFVDTEPTVIDEIKTGEYSGLYHPEHLICGKEDASSNFAKGKTGYEPLLNQTMDAIRKATENCTGLQGFFIYNSVGGGTGSGFTAALCEKLADKYTKKTKLNTVIWPSPKLSSGVVEPYNAVLNTHAMMKFVNCTFMVDNESIYKICQKQLGVHSPSYFHLNQLIAQAMSSITASLRFEGTLNVDLNEFPTNLVPFPRDHFAMMSYAPIVTPEKAIRQTLSVQELTSSLFDPNSLMIQCDDINKGKFMSCCMMYRGDVSSREVNLAVSGIKKQNTVPFVGWCPCSFKCGINSQPATAVPGSSYASTARSACMIANHTAMCQVFQKVNQNFDLMFGKRAFVHHYVGEGMEENEFTDARQDLYELEVDYANLALDNTIEGESMTAQ.

GTP is bound by residues Q11, E77, S145, G149, T150, S184, N211, and N233. E77 contributes to the Mg(2+) binding site. The active site involves E259.

It belongs to the tubulin family. As to quaternary structure, dimer of alpha and beta chains. A typical microtubule is a hollow water-filled tube with an outer diameter of 25 nm and an inner diameter of 15 nM. Alpha-beta heterodimers associate head-to-tail to form protofilaments running lengthwise along the microtubule wall with the beta-tubulin subunit facing the microtubule plus end conferring a structural polarity. Microtubules usually have 13 protofilaments but different protofilament numbers can be found in some organisms and specialized cells. The cofactor is Mg(2+).

Its subcellular location is the cytoplasm. It localises to the cytoskeleton. It carries out the reaction GTP + H2O = GDP + phosphate + H(+). In terms of biological role, tubulin is the major constituent of microtubules, a cylinder consisting of laterally associated linear protofilaments composed of alpha- and beta-tubulin heterodimers. Microtubules grow by the addition of GTP-tubulin dimers to the microtubule end, where a stabilizing cap forms. Below the cap, tubulin dimers are in GDP-bound state, owing to GTPase activity of alpha-tubulin. This chain is Tubulin alpha chain, found in Entamoeba histolytica (strain ATCC 30459 / HM-1:IMSS / ABRM).